The following is a 274-amino-acid chain: NADPH-dependent 7-cyano-7-deazaguanine reductase (274 aa).

80–82 (VES) lines the substrate pocket. 82 to 83 (SK) contributes to the NADPH binding site. The active-site Thioimide intermediate is cysteine 181. Aspartate 188 (proton donor) is an active-site residue. Residue 220–221 (HE) participates in substrate binding. 249–250 (RG) contributes to the NADPH binding site.

It belongs to the GTP cyclohydrolase I family. QueF type 2 subfamily. As to quaternary structure, homodimer.

It localises to the cytoplasm. The catalysed reaction is 7-aminomethyl-7-carbaguanine + 2 NADP(+) = 7-cyano-7-deazaguanine + 2 NADPH + 3 H(+). The protein operates within tRNA modification; tRNA-queuosine biosynthesis. Catalyzes the NADPH-dependent reduction of 7-cyano-7-deazaguanine (preQ0) to 7-aminomethyl-7-deazaguanine (preQ1). The sequence is that of NADPH-dependent 7-cyano-7-deazaguanine reductase from Paraburkholderia phymatum (strain DSM 17167 / CIP 108236 / LMG 21445 / STM815) (Burkholderia phymatum).